A 514-amino-acid polypeptide reads, in one-letter code: Bifunctional purine biosynthesis protein PurH (514 aa).

Residues 1–146 (MARLALLSVS…KNFAHLAVLC (146 aa)) enclose the MGS-like domain.

This sequence belongs to the PurH family.

It catalyses the reaction (6R)-10-formyltetrahydrofolate + 5-amino-1-(5-phospho-beta-D-ribosyl)imidazole-4-carboxamide = 5-formamido-1-(5-phospho-D-ribosyl)imidazole-4-carboxamide + (6S)-5,6,7,8-tetrahydrofolate. The enzyme catalyses IMP + H2O = 5-formamido-1-(5-phospho-D-ribosyl)imidazole-4-carboxamide. The protein operates within purine metabolism; IMP biosynthesis via de novo pathway; 5-formamido-1-(5-phospho-D-ribosyl)imidazole-4-carboxamide from 5-amino-1-(5-phospho-D-ribosyl)imidazole-4-carboxamide (10-formyl THF route): step 1/1. It functions in the pathway purine metabolism; IMP biosynthesis via de novo pathway; IMP from 5-formamido-1-(5-phospho-D-ribosyl)imidazole-4-carboxamide: step 1/1. The polypeptide is Bifunctional purine biosynthesis protein PurH (Nostoc punctiforme (strain ATCC 29133 / PCC 73102)).